A 339-amino-acid polypeptide reads, in one-letter code: Diguanylate cyclase VdcA (339 aa).

The GGDEF domain maps to 206 to 339 (QQVSLIMLDI…NLGRNRVMPL (134 aa)). D214 serves as a coordination point for Mg(2+). Substrate is bound by residues N222 and D231. E257 is a binding site for Mg(2+). E257 acts as the Proton acceptor in catalysis.

The cofactor is Mg(2+).

It catalyses the reaction 2 GTP = 3',3'-c-di-GMP + 2 diphosphate. The protein operates within purine metabolism; 3',5'-cyclic di-GMP biosynthesis. Diguanylate cyclase (DGC) that catalyzes the synthesis of cyclic diguanylate (c-di-GMP) via the condensation of 2 GTP molecules. Is involved in the modulation of intracellular c-di-GMP levels. Cyclic-di-GMP is a second messenger which positively regulates biofilm formation and negatively regulates virulence in V.cholerae, and is proposed to play an important role in the transition from persistence in the environment to survival in the host. Overexpression of vdcA results in increased biofilm formation, and reduced motility and virulence. The protein is Diguanylate cyclase VdcA (vdcA) of Vibrio cholerae serotype O1 (strain ATCC 39315 / El Tor Inaba N16961).